The primary structure comprises 1009 residues: Lateral signaling target protein 2 homolog (1009 aa).

Disordered regions lie at residues 313-460 (PVGS…EEQL), 497-629 (ASED…KRCS), and 777-905 (MQRN…TATA). 3 stretches are compositionally biased toward low complexity: residues 327 to 348 (SSTPTTSSNNNNNNKSSSSSSG), 364 to 398 (QRNNNNNQQNSNESTTLPPRSPSMLSLSASSTPTA), and 406 to 427 (PSHSIASTTSSAASSNSTHPPA). The segment covering 430 to 458 (SDGDDEDEDEEEDEEEDELEDTEDDTDEE) has biased composition (acidic residues). The residue at position 541 (Ser541) is a Phosphoserine. Over residues 544-558 (SEPHRDQGETIKSTE) the composition is skewed to basic and acidic residues. Residues 562–575 (QQQQQQEQQTLQSS) are compositionally biased toward low complexity. Basic residues-rich tracts occupy residues 576 to 601 (RQRHSHSHSHSHRHHHRHHHHHHHST) and 609 to 627 (QPHHHQPHPHRLTRSGRKR). Over residues 780 to 798 (NNTIDNPSSSNTSSSSATT) the composition is skewed to low complexity. Ser807 carries the phosphoserine modification. A compositionally biased stretch (low complexity) spans 822–878 (VHQQEQEMQQQQDHQQQQHQHQVQVQLQRQRNNSVGSNTPSSASSTSSSSEQNSPVS). An FYVE-type zinc finger spans residues 917–977 (DGKAPRCMSC…VCRDCYVREV (61 aa)). Cys923, Cys926, Cys939, Cys942, Cys947, Cys950, Cys969, and Cys972 together coordinate Zn(2+).

Belongs to the lst-2 family.

Functionally, negative regulator of epidermal growth factor receptor (EGFR) signaling. This Drosophila persimilis (Fruit fly) protein is Lateral signaling target protein 2 homolog.